A 495-amino-acid polypeptide reads, in one-letter code: Meiosis-specific nuclear structural protein 1 (495 aa).

The tract at residues 1–314 is interaction with BBOF1; it reads MGSKRRNLSC…KLEEMLRQRE (314 aa). The stretch at 28–410 forms a coiled coil; it reads VQALKNVNSQ…QLEHRRAVEK (383 aa). Phosphotyrosine is present on Tyr188.

The protein belongs to the MNS1 family. As to quaternary structure, able to form oligomers. Microtubule inner protein component of sperm flagellar doublet microtubules. Interacts with ODAD1. Interacts with BBOF1. In terms of tissue distribution, expressed in nasal respiratory epithelium and in the sperm.

The protein localises to the nucleus. It is found in the cytoplasm. Its subcellular location is the cytoskeleton. It localises to the cilium axoneme. The protein resides in the flagellum axoneme. In terms of biological role, microtubule inner protein (MIP) part of the dynein-decorated doublet microtubules (DMTs) in cilia axoneme, which is required for motile cilia beating. May play a role in the control of meiotic division and germ cell differentiation through regulation of pairing and recombination during meiosis. Required for sperm flagella assembly. May play a role in the assembly and function of the outer dynein arm-docking complex (ODA-DC). ODA-DC mediates outer dynein arms (ODA) binding onto the axonemal doublet microtubules. This Homo sapiens (Human) protein is Meiosis-specific nuclear structural protein 1.